The chain runs to 169 residues: Co-chaperone protein HscB homolog (169 aa).

The region spanning Asn2–Leu74 is the J domain.

This sequence belongs to the HscB family. Interacts with HscA and stimulates its ATPase activity.

In terms of biological role, co-chaperone involved in the maturation of iron-sulfur cluster-containing proteins. Seems to help targeting proteins to be folded toward HscA. The chain is Co-chaperone protein HscB homolog from Psychromonas ingrahamii (strain DSM 17664 / CCUG 51855 / 37).